Reading from the N-terminus, the 457-residue chain is MMEGQQHGEQLKRGLKNRHIQLIALGGAIGTGLFLGSASVIQSAGPGIILGYAIAGFIAFLIMRQLGEMVVEEPVAGSFSHFAYKYWGSFAGFASGWNYWVLYVLVAMAELTAVGKYIQFWYPEIPTWVSAAVFFVVINAINLTNVKVFGEMEFWFAIIKVIAVVAMIIFGGWLLFSGNGGPQASVSNLWDQGGFLPHGFTGLVMMMAIIMFSFGGLELVGITAAEADNPEQSIPKATNQVIYRILIFYIGSLAVLLSLMPWTRVTADTSPFVLIFHELGDTFVANALNIVVLTAALSVYNSCVYCNSRMLFGLAQQGNAPKALASVDKRGVPVNTILVSALVTALCVLINYLAPESAFGLLMALVVSALVINWAMISLAHMKFRRAKQEQGVVTRFPALLYPLGNWICLLFMAAVLVIMLMTPGMAISVYLIPVWLIVLGIGYLFKEKTAKAVKAH.

The Cytoplasmic portion of the chain corresponds to 1–19; sequence MMEGQQHGEQLKRGLKNRH. The helical transmembrane segment at 20–40 threads the bilayer; that stretch reads IQLIALGGAIGTGLFLGSASV. The Periplasmic portion of the chain corresponds to 41 to 42; it reads IQ. The chain crosses the membrane as a helical span at residues 43-63; sequence SAGPGIILGYAIAGFIAFLIM. Topologically, residues 64–86 are cytoplasmic; that stretch reads RQLGEMVVEEPVAGSFSHFAYKY. Residues 87–107 form a helical membrane-spanning segment; it reads WGSFAGFASGWNYWVLYVLVA. The Periplasmic segment spans residues 108 to 117; sequence MAELTAVGKY. The chain crosses the membrane as a helical span at residues 118–138; it reads IQFWYPEIPTWVSAAVFFVVI. Topologically, residues 139–155 are cytoplasmic; the sequence is NAINLTNVKVFGEMEFW. Residues 156 to 176 traverse the membrane as a helical segment; sequence FAIIKVIAVVAMIIFGGWLLF. At 177–201 the chain is on the periplasmic side; that stretch reads SGNGGPQASVSNLWDQGGFLPHGFT. Residues 202 to 222 traverse the membrane as a helical segment; it reads GLVMMMAIIMFSFGGLELVGI. The Cytoplasmic segment spans residues 223–240; the sequence is TAAEADNPEQSIPKATNQ. A helical transmembrane segment spans residues 241–261; the sequence is VIYRILIFYIGSLAVLLSLMP. Over 262 to 271 the chain is Periplasmic; that stretch reads WTRVTADTSP. Residues 272-292 form a helical membrane-spanning segment; it reads FVLIFHELGDTFVANALNIVV. At 293-333 the chain is on the cytoplasmic side; the sequence is LTAALSVYNSCVYCNSRMLFGLAQQGNAPKALASVDKRGVP. The chain crosses the membrane as a helical span at residues 334-354; the sequence is VNTILVSALVTALCVLINYLA. The Periplasmic portion of the chain corresponds to 355 to 358; that stretch reads PESA. The chain crosses the membrane as a helical span at residues 359-379; sequence FGLLMALVVSALVINWAMISL. The Cytoplasmic segment spans residues 380–399; it reads AHMKFRRAKQEQGVVTRFPA. Residues 400–420 traverse the membrane as a helical segment; that stretch reads LLYPLGNWICLLFMAAVLVIM. The Periplasmic segment spans residues 421 to 425; the sequence is LMTPG. A helical transmembrane segment spans residues 426 to 446; the sequence is MAISVYLIPVWLIVLGIGYLF. Residues 447 to 457 lie on the Cytoplasmic side of the membrane; the sequence is KEKTAKAVKAH.

It belongs to the amino acid-polyamine-organocation (APC) superfamily. Amino acid transporter (AAT) (TC 2.A.3.1) family.

The protein resides in the cell inner membrane. The enzyme catalyses L-phenylalanine(in) + H(+)(in) = L-phenylalanine(out) + H(+)(out). It catalyses the reaction L-tryptophan(in) + H(+)(in) = L-tryptophan(out) + H(+)(out). It carries out the reaction L-tyrosine(in) + H(+)(in) = L-tyrosine(out) + H(+)(out). In terms of biological role, permease that is involved in the active transport across the cytoplasmic membrane of all three aromatic amino acids, phenylalanine, tyrosine and tryptophan. This Shigella flexneri protein is Aromatic amino acid transport protein AroP (aroP).